A 309-amino-acid polypeptide reads, in one-letter code: Porphobilinogen deaminase (309 aa).

Cysteine 240 bears the S-(dipyrrolylmethanemethyl)cysteine mark.

It belongs to the HMBS family. In terms of assembly, monomer. Requires dipyrromethane as cofactor.

It carries out the reaction 4 porphobilinogen + H2O = hydroxymethylbilane + 4 NH4(+). It participates in porphyrin-containing compound metabolism; protoporphyrin-IX biosynthesis; coproporphyrinogen-III from 5-aminolevulinate: step 2/4. In terms of biological role, tetrapolymerization of the monopyrrole PBG into the hydroxymethylbilane pre-uroporphyrinogen in several discrete steps. The chain is Porphobilinogen deaminase from Lawsonia intracellularis (strain PHE/MN1-00).